A 232-amino-acid chain; its full sequence is 5'-methylthioadenosine/S-adenosylhomocysteine nucleosidase (232 aa).

Catalysis depends on glutamate 12, which acts as the Proton acceptor. Substrate is bound by residues glycine 78, isoleucine 152, and 173 to 174 (ME). Aspartate 197 serves as the catalytic Proton donor.

Belongs to the PNP/UDP phosphorylase family. MtnN subfamily. As to quaternary structure, homodimer.

It carries out the reaction S-adenosyl-L-homocysteine + H2O = S-(5-deoxy-D-ribos-5-yl)-L-homocysteine + adenine. The enzyme catalyses S-methyl-5'-thioadenosine + H2O = 5-(methylsulfanyl)-D-ribose + adenine. It catalyses the reaction 5'-deoxyadenosine + H2O = 5-deoxy-D-ribose + adenine. Its pathway is amino-acid biosynthesis; L-methionine biosynthesis via salvage pathway; S-methyl-5-thio-alpha-D-ribose 1-phosphate from S-methyl-5'-thioadenosine (hydrolase route): step 1/2. In terms of biological role, catalyzes the irreversible cleavage of the glycosidic bond in both 5'-methylthioadenosine (MTA) and S-adenosylhomocysteine (SAH/AdoHcy) to adenine and the corresponding thioribose, 5'-methylthioribose and S-ribosylhomocysteine, respectively. Also cleaves 5'-deoxyadenosine, a toxic by-product of radical S-adenosylmethionine (SAM) enzymes, into 5-deoxyribose and adenine. Thus, is required for in vivo function of the radical SAM enzymes biotin synthase and lipoic acid synthase, that are inhibited by 5'-deoxyadenosine accumulation. This Salmonella enteritidis PT4 (strain P125109) protein is 5'-methylthioadenosine/S-adenosylhomocysteine nucleosidase.